A 341-amino-acid polypeptide reads, in one-letter code: D-aspartate oxidase (341 aa).

Methionine 1 carries the blocked amino end (Met) modification. 7 residues coordinate FAD: aspartate 36, lysine 37, threonine 43, serine 44, methionine 50, glycine 307, and isoleucine 311. The Microbody targeting signal signature appears at 339-341 (SKL).

It belongs to the DAMOX/DASOX family. Monomer. Interacts with PEX5; the interaction is direct and required for localization of DDO to the peroxisome. It depends on FAD as a cofactor. In terms of tissue distribution, in the kidney, expressed in epithelial cells of the proximal tubules and in the liver (at protein level).

It is found in the peroxisome matrix. The protein localises to the cytoplasm. It localises to the cytosol. The enzyme catalyses D-aspartate + O2 + H2O = oxaloacetate + H2O2 + NH4(+). It catalyses the reaction D-glutamate + O2 + H2O = H2O2 + 2-oxoglutarate + NH4(+). Its activity is regulated as follows. Inhibited by phenylglyoxal; chemical modification of arginine residues in the enzyme with phenylglyoxal leads to the irreversible loss of activity towards dicarboxylic D-amino acids, paralleled by a transient appearance of activity versus monocarboxylic ones. Functionally, selectively catalyzes the oxidative deamination of acidic amino acids. Suppresses the level of D-aspartate in the brain, an amino acid that can act as an agonist for glutamate receptors. Protects the organism from the toxicity of D-amino acids. May also function in the intestine. In Bos taurus (Bovine), this protein is D-aspartate oxidase (DDO).